We begin with the raw amino-acid sequence, 218 residues long: uncharacterized protein (218 aa).

The protein belongs to the HAD-like hydrolase superfamily.

It localises to the cytoplasm. Its subcellular location is the nucleus. This is an uncharacterized protein from Saccharomyces cerevisiae (strain ATCC 204508 / S288c) (Baker's yeast).